A 380-amino-acid polypeptide reads, in one-letter code: Alkaline protease (380 aa).

The signal sequence occupies residues 1–27 (MKKPLGKIVASTALLISVAFSSSIASA). The propeptide occupies 28 to 112 (AEEAKEKYLI…EEDAEVTTMA (85 aa)). Residues 34-111 (KYLIGFNEQE…IEEDAEVTTM (78 aa)) enclose the Inhibitor I9 domain. Gln113 serves as a coordination point for Ca(2+). The Peptidase S8 domain maps to 116-379 (PWGISRVQAP…SGLVNAEAAT (264 aa)). Asp143 functions as the Charge relay system in the catalytic mechanism. Asp151 is a Ca(2+) binding site. Residue His173 is the Charge relay system of the active site. Positions 184, 186, 188, 190, 274, 276, and 279 each coordinate Ca(2+). The active-site Charge relay system is Ser326.

The protein belongs to the peptidase S8 family. Requires Ca(2+) as cofactor.

It localises to the secreted. The protein is Alkaline protease of Alkalihalobacillus alcalophilus (Bacillus alcalophilus).